A 428-amino-acid chain; its full sequence is GTPase Obg (428 aa).

Residues 1–158 (MFIDEVIITV…IKVKLELKLL (158 aa)) form the Obg domain. The region spanning 159 to 330 (ADVALVGYPS…ILYKTYDMLS (172 aa)) is the OBG-type G domain. Residues 165–172 (GYPSVGKS), 190–194 (FTTLE), 212–215 (DIPG), 282–285 (NKMD), and 311–313 (SVL) contribute to the GTP site. Ser-172 and Thr-192 together coordinate Mg(2+). In terms of domain architecture, OCT spans 349-428 (ELKIEKEDFE…IADVEFEYFE (80 aa)).

Belongs to the TRAFAC class OBG-HflX-like GTPase superfamily. OBG GTPase family. Monomer. Mg(2+) is required as a cofactor.

The protein resides in the cytoplasm. In terms of biological role, an essential GTPase which binds GTP, GDP and possibly (p)ppGpp with moderate affinity, with high nucleotide exchange rates and a fairly low GTP hydrolysis rate. Plays a role in control of the cell cycle, stress response, ribosome biogenesis and in those bacteria that undergo differentiation, in morphogenesis control. The chain is GTPase Obg from Fusobacterium nucleatum subsp. nucleatum (strain ATCC 25586 / DSM 15643 / BCRC 10681 / CIP 101130 / JCM 8532 / KCTC 2640 / LMG 13131 / VPI 4355).